The primary structure comprises 249 residues: Phosphonates import ATP-binding protein PhnC (249 aa).

Residues 2–246 (IEFKKVEKVW…KLNESKLEEI (245 aa)) enclose the ABC transporter domain. Residue 35 to 42 (GLSGAGKT) coordinates ATP.

Belongs to the ABC transporter superfamily. Phosphonates importer (TC 3.A.1.9.1) family. The complex is composed of two ATP-binding proteins (PhnC), two transmembrane proteins (PhnE) and a solute-binding protein (PhnD).

It is found in the cell membrane. It carries out the reaction phosphonate(out) + ATP + H2O = phosphonate(in) + ADP + phosphate + H(+). Part of the ABC transporter complex PhnCDE involved in phosphonates import. Responsible for energy coupling to the transport system. The sequence is that of Phosphonates import ATP-binding protein PhnC from Mesoplasma florum (strain ATCC 33453 / NBRC 100688 / NCTC 11704 / L1) (Acholeplasma florum).